The following is a 79-amino-acid chain: Transcriptional regulator SplA (79 aa).

Regulator of the spore photoproduct lyase operon (splAB). In Bacillus subtilis (strain 168), this protein is Transcriptional regulator SplA (splA).